The sequence spans 71 residues: Brevinin-1V (71 aa).

Residues 1–22 (MFTLKKSLLLLFFLGTINLSLC) form the signal peptide. Residues 23-45 (EQERDADEEERRDDSEERDIEVE) constitute a propeptide that is removed on maturation. A disulfide bond links cysteine 65 and cysteine 71.

This sequence belongs to the frog skin active peptide (FSAP) family. Brevinin subfamily. Expressed by the skin glands.

It is found in the secreted. Has antimicrobial activity against Gram-positive bacteria and fungi but has weak or no activity against a range of Gram-negative bacteria except P.faecalis. Active against the Gram-positive bacteria E.faecium 091299 (MIC=37.5 uM), S.aureus ATCC 25923 (MIC=2.4 uM), S.carnosus KHS (MIC=19 uM), B.licheniformis X39 (MIC=2.4 uM) and R.rhodochrous X15 (MIC=1.2 uM) and a lower activity against E.faecalis 981 (MIC=75 uM). Active against the Gram-negative bacterium P.faecalis X29 (MIC=9.5 uM) is virtually inactive against E.coli ATCC 25922 (MIC=150 uM), and inactive against P.aeruginosa and S.typhi. Has antifungal activity against C.albicans ATCC 2002 (MIC=9.5 uM) and is also active against the slime mold 090223 (MIC=1.2 uM). Has low hemolytic activity against human erythrocytes (LC(50)=75 uM). In Odorrana hainanensis (Odor frog), this protein is Brevinin-1V.